Consider the following 357-residue polypeptide: Ribosomal RNA large subunit methyltransferase M (357 aa).

S-adenosyl-L-methionine-binding positions include serine 183, 216–219 (APGG), aspartate 235, aspartate 255, and aspartate 271. Lysine 300 acts as the Proton acceptor in catalysis.

It belongs to the class I-like SAM-binding methyltransferase superfamily. RNA methyltransferase RlmE family. RlmM subfamily. As to quaternary structure, monomer.

It localises to the cytoplasm. It carries out the reaction cytidine(2498) in 23S rRNA + S-adenosyl-L-methionine = 2'-O-methylcytidine(2498) in 23S rRNA + S-adenosyl-L-homocysteine + H(+). Functionally, catalyzes the 2'-O-methylation at nucleotide C2498 in 23S rRNA. The protein is Ribosomal RNA large subunit methyltransferase M of Pseudomonas savastanoi pv. phaseolicola (strain 1448A / Race 6) (Pseudomonas syringae pv. phaseolicola (strain 1448A / Race 6)).